The primary structure comprises 294 residues: G-protein coupled receptor homolog U51 (294 aa).

Residues 1–14 (MKNIDLTNWKLLAE) lie on the Extracellular side of the membrane. A helical membrane pass occupies residues 15-35 (IYEYLFFFSFFFLCLLVIIVV). The Cytoplasmic segment spans residues 36–47 (KFNNSTVGREYT). A helical transmembrane segment spans residues 48 to 68 (FSTFSGMLVYILLLPVKMGML). Over 69-79 (TKMWDVSTDYC) the chain is Extracellular. A helical transmembrane segment spans residues 80–102 (IILMFLSDFSFIFSSWALTLLAL). The Cytoplasmic portion of the chain corresponds to 103–119 (ERINNFSFSEIKVNETK). Residues 120–140 (ILKQMSFPIIWVTSIFQAVQI) traverse the membrane as a helical segment. The Extracellular segment spans residues 141–166 (SMKYKKSQMNLEDDYCLLAIERSAEE). Residues 167–187 (AWILLMYTVVIPTFIVFFYVL) traverse the membrane as a helical segment. The Cytoplasmic portion of the chain corresponds to 188–200 (NKRFLFLERDLNS). Residues 201–221 (IVTHLSLFLFFGALCFFPASV) form a helical membrane-spanning segment. At 222 to 236 (LNEFNCNRLFYGLHE) the chain is on the extracellular side. The chain crosses the membrane as a helical span at residues 237-257 (LLIVCLELKIFYVPTMTYIIS). The Cytoplasmic segment spans residues 258–294 (CENYRLAAKAFFCKCFKPCFLMPSLRKLQQPTKSTQF).

The protein belongs to the G-protein coupled receptor 1 family.

The protein resides in the host cell membrane. The polypeptide is G-protein coupled receptor homolog U51 (U51) (Human herpesvirus 7 (strain JI) (HHV-7)).